The chain runs to 669 residues: 5-taurinomethyluridine-[tRNA] synthase subunit MTO1, mitochondrial (669 aa).

Residues 1-25 (MFLLRGRGHWAAASLGRRLPLRRLR) constitute a mitochondrion transit peptide. Residues 42–47 (GGGHAG), Val-154, Ser-217, and Gln-406 each bind FAD. An N6-methyllysine modification is found at Lys-507.

Belongs to the MnmG family. As to quaternary structure, homodimer; forms a dimer in the presence of potassium. Interacts with GTPBP3; forms the GTPBP3-MTO1 complex composed of homodimers of GTPBP3 and MTO1. FAD is required as a cofactor. Ubiquitously expressed in various tissues, but with markedly elevated expression in tissues of high metabolic rates.

It is found in the mitochondrion. It carries out the reaction 5,10-methylenetetrahydrofolate + uridine(34) in tRNA + taurine + GTP + A + H2O = 5-taurinomethyluridine(34) in tRNA + 7,8-dihydrofolate + GDP + AH2 + phosphate + H(+). In terms of biological role, component of the GTPBP3-MTO1 complex that catalyzes the 5-taurinomethyluridine (taum(5)U) modification at the 34th wobble position (U34) of mitochondrial tRNAs (mt-tRNAs), which plays a role in mt-tRNA decoding and mitochondrial translation. Taum(5)U formation on mammalian mt-tRNA requires the presence of both GTPBP3-mediated GTPase activity and MTO1 catalytic activity. The polypeptide is 5-taurinomethyluridine-[tRNA] synthase subunit MTO1, mitochondrial (Mus musculus (Mouse)).